The following is a 247-amino-acid chain: 4-nitrobenzoate reductase (247 aa).

Residue 29–33 (RRSVR) participates in FMN binding. Residues serine 59, arginine 112, tyrosine 120, and leucine 126 each coordinate NADP(+). Arginine 232 is an FMN binding site.

It belongs to the nitroreductase family. It depends on FMN as a cofactor.

The catalysed reaction is 4-nitrobenzoate + 2 NADPH + 2 H(+) = 4-hydroxylaminobenzoate + 2 NADP(+) + H2O. Its function is as follows. Nitroreductase involved in the degradation of nitroaromatic compounds. Catalyzes the conversion of 4-nitrobenzoate to 4-hydroxylaminobenzoate. The polypeptide is 4-nitrobenzoate reductase (Nocardioides sp. (strain LMS-CY)).